An 838-amino-acid polypeptide reads, in one-letter code: Protein P (838 aa).

The interval 1 to 179 (MPLSYQHFRK…FCGSPYSWEQ (179 aa)) is terminal protein domain (TP). The spacer stretch occupies residues 180–341 (ELQHSQRHGD…YCLSHLVNLR (162 aa)). The interval 219-245 (GLQPHQGPLASSQPGRSGSIRARAHPS) is disordered. The tract at residues 342–685 (EDWGPCDDHG…YMNLYPVARQ (344 aa)) is polymerase/reverse transcriptase domain (RT). The region spanning 352–595 (EHHIRIPRTP…YSLNFMGYII (244 aa)) is the Reverse transcriptase domain. Mg(2+) is bound by residues Asp424, Asp546, and Asp547.

The protein belongs to the hepadnaviridae P protein family.

The enzyme catalyses DNA(n) + a 2'-deoxyribonucleoside 5'-triphosphate = DNA(n+1) + diphosphate. The catalysed reaction is Endonucleolytic cleavage to 5'-phosphomonoester.. With respect to regulation, activated by host HSP70 and HSP40 in vitro to be able to bind the epsilon loop of the pgRNA. Because deletion of the RNase H region renders the protein partly chaperone-independent, the chaperones may be needed indirectly to relieve occlusion of the RNA-binding site by this domain. Inhibited by several reverse-transcriptase inhibitors: Lamivudine, Adefovir and Entecavir. Its function is as follows. Multifunctional enzyme that converts the viral RNA genome into dsDNA in viral cytoplasmic capsids. This enzyme displays a DNA polymerase activity that can copy either DNA or RNA templates, and a ribonuclease H (RNase H) activity that cleaves the RNA strand of RNA-DNA heteroduplexes in a partially processive 3'- to 5'-endonucleasic mode. Neo-synthesized pregenomic RNA (pgRNA) are encapsidated together with the P protein, and reverse-transcribed inside the nucleocapsid. Initiation of reverse-transcription occurs first by binding the epsilon loop on the pgRNA genome, and is initiated by protein priming, thereby the 5'-end of (-)DNA is covalently linked to P protein. Partial (+)DNA is synthesized from the (-)DNA template and generates the relaxed circular DNA (RC-DNA) genome. After budding and infection, the RC-DNA migrates in the nucleus, and is converted into a plasmid-like covalently closed circular DNA (cccDNA). The activity of P protein does not seem to be necessary for cccDNA generation, and is presumably released from (+)DNA by host nuclear DNA repair machinery. In Hepatitis B virus genotype A2 subtype adw (isolate Japan/Nishioka/1983) (HBV-A), this protein is Protein P.